We begin with the raw amino-acid sequence, 427 residues long: Ribitol transporter (427 aa).

Residues methionine 1–glutamine 7 lie on the Cytoplasmic side of the membrane. Residues tryptophan 8–glycine 28 traverse the membrane as a helical segment. The Extracellular portion of the chain corresponds to aspartate 29–serine 51. A helical transmembrane segment spans residues phenylalanine 52–alanine 72. Over glutamate 73–lysine 79 the chain is Cytoplasmic. Residues alanine 80–leucine 100 traverse the membrane as a helical segment. At glycine 101–leucine 107 the chain is on the extracellular side. Residues isoleucine 108–valine 128 traverse the membrane as a helical segment. Over alanine 129–serine 141 the chain is Cytoplasmic. A helical transmembrane segment spans residues alanine 142–proline 162. Residues serine 163 to glutamate 171 lie on the Extracellular side of the membrane. Residues methionine 172 to serine 192 form a helical membrane-spanning segment. At methionine 193–threonine 238 the chain is on the cytoplasmic side. A helical membrane pass occupies residues leucine 239–threonine 259. At threonine 260–tryptophan 263 the chain is on the extracellular side. The helical transmembrane segment at leucine 264–valine 284 threads the bilayer. At alanine 285 to arginine 295 the chain is on the cytoplasmic side. A helical membrane pass occupies residues tryptophan 296–phenylalanine 316. Topologically, residues glycine 317 to alanine 323 are extracellular. Residues leucine 324–phenylalanine 344 form a helical membrane-spanning segment. The Cytoplasmic segment spans residues proline 345 to asparagine 360. A helical membrane pass occupies residues leucine 361–phenylalanine 381. At serine 382–threonine 383 the chain is on the extracellular side. The helical transmembrane segment at isoleucine 384 to isoleucine 404 threads the bilayer. Residues arginine 405 to serine 427 are Cytoplasmic-facing.

The protein belongs to the major facilitator superfamily. Sugar transporter (TC 2.A.1.1) family. CsbX subfamily.

The protein resides in the cell membrane. This is Ribitol transporter (rbtT) from Klebsiella pneumoniae.